Here is a 234-residue protein sequence, read N- to C-terminus: Ribonuclease HII (234 aa).

In terms of domain architecture, RNase H type-2 spans 47–234 (IRIAGVDEVG…KTVHKILYQE (188 aa)). A divalent metal cation-binding residues include Asp-53, Glu-54, and Asp-144.

This sequence belongs to the RNase HII family. The cofactor is Mn(2+). It depends on Mg(2+) as a cofactor.

It localises to the cytoplasm. The enzyme catalyses Endonucleolytic cleavage to 5'-phosphomonoester.. In terms of biological role, endonuclease that specifically degrades the RNA of RNA-DNA hybrids. In Ruegeria pomeroyi (strain ATCC 700808 / DSM 15171 / DSS-3) (Silicibacter pomeroyi), this protein is Ribonuclease HII.